The sequence spans 790 residues: Centrosomal protein of 78 kDa (790 aa).

5 disordered regions span residues 325–345 (YQWV…QRKK), 362–385 (GLAT…YAPN), 428–462 (VTVT…IKEE), 654–732 (AKTG…LNEP), and 756–790 (KTIK…AHLT). Phosphoserine is present on residues Ser330 and Ser332. A compositionally biased stretch (low complexity) spans 428 to 438 (VTVTVESPSSS). A coiled-coil region spans residues 455–510 (QKTSIKEETLQEKLEECLRQLKEERVIRLKADKRVSELEHENAQLRNINFSLSEAL). 2 stretches are compositionally biased toward basic and acidic residues: residues 693–708 (PSRR…KDLL) and 721–732 (GPGDRRSLLNEP).

It belongs to the CEP78 family. In terms of assembly, interacts with PLK4. Interacts with FAM161A. Interacts with IFT20; regulating IFT20 stability and localization. Interacts with TTC21A; regulating TTC21A stability and localization. Interacts with USP16; promoting USP16-dependent deubiquitination of tektins. Interacts with DCAF1/VPRBP; promoting localization of the EDVP complex to centrosomes. Interacts with CEP350; promoting CEP78 localization to centrosome and centriole. In terms of tissue distribution, expressed by photoreceptor cells in the retina.

The protein resides in the cytoplasm. The protein localises to the cytoskeleton. It localises to the microtubule organizing center. Its subcellular location is the centrosome. It is found in the centriole. The protein resides in the cilium basal body. Centriole wall protein that localizes to mature centrioles and regulates centriole and cilia biogenesis. Involved in centrosome duplication: required for efficient PLK4 centrosomal localization and PLK4-induced overduplication of centrioles. Involved in cilium biogenesis and controls cilium length. Acts as a regulator of protein stability by preventing ubiquitination of centrosomal proteins, such as CCP110 and tektins. Associates with the EDVP complex, preventing ubiquitination and degradation of CCP110. Promotes deubiquitination of tektin proteins (TEKT1, TEKT2, TEK3, TEKT4 and TEKT5) via its interaction with USP16. This is Centrosomal protein of 78 kDa from Mus musculus (Mouse).